An 826-amino-acid polypeptide reads, in one-letter code: Protein lozenge (826 aa).

Disordered regions lie at residues 1-45 (MHLH…ASQT), 87-171 (PVSV…WSSS), and 214-263 (ASVG…NNNN). The span at 12 to 24 (PPSPSPNPTPTPS) shows a compositional bias: pro residues. The segment covering 106–141 (SHHHHHLHHHYSPYHHAHPYHPPHPHAPHHHHHHHP) has biased composition (basic residues). The segment covering 142–153 (PYPYPPAGPHPP) has biased composition (pro residues). Over residues 156-171 (VTSSSTSPTGNGWSSS) the composition is skewed to polar residues. The Runt domain maps to 275-403 (LVQKRQQEHP…TVDGPREPRS (129 aa)). Over residues 774–798 (QQQQQQQQQQQQVHHPQQQQVESAG) the composition is skewed to low complexity. The disordered stretch occupies residues 774–826 (QQQQQQQQQQQQVHHPQQQQVESAGEVGGSGAGGVESAREEDVGDLSQVWRPY).

Expressed in the pupal eye during programmed cell death.

The protein localises to the nucleus. Its function is as follows. Involved in prepatterning photoreceptor precursors in the developing eye; in the larval eye disk it defines a subset of cells as an equipotential group that is competent to respond to the sevenless developmental signal and another subset that confer proper photoreceptor identity by positively regulating the homeo box gene Bar. Involved in the aop/pnt dynamic in a Ras-dependent manner to regulate pros expression. Promotes apoptosis in the pupal eye by directly activating aos and klu. Also modulates hid- and rpr-mediated cell death. Regulates amos function in olfactory sensilla development. This chain is Protein lozenge (lz), found in Drosophila melanogaster (Fruit fly).